Reading from the N-terminus, the 74-residue chain is Large ribosomal subunit protein uL29 (74 aa).

The protein belongs to the universal ribosomal protein uL29 family.

The chain is Large ribosomal subunit protein uL29 (rpmC) from Streptomyces coelicolor (strain ATCC BAA-471 / A3(2) / M145).